The following is a 689-amino-acid chain: Chloride channel protein ClC-Kb (689 aa).

At M1–W51 the chain is on the cytoplasmic side. 2 consecutive transmembrane segments (helical) span residues Y52 to Q83 and L92 to A112. The segment at residues P117 to K128 is an intramembrane region (helical). S122 is a chloride binding site. 2 helical membrane-spanning segments follow: residues I142–T161 and M162–L181. The N-linked (GlcNAc...) asparagine glycan is linked to N194. The segment at residues A204 to V225 is an intramembrane region (helical). The helical transmembrane segment at Y237–V256 threads the bilayer. Ca(2+)-binding residues include E260, E262, D279, and E282. 2 helical membrane-spanning segments follow: residues M283–V311 and P326–E343. The segment at residues A350 to S361 is an intramembrane region (helical). The next 2 membrane-spanning stretches (helical) occupy residues G402–P422 and M423–V442. Position 428 (F428) interacts with chloride. The segment at residues G466 to A498 is an intramembrane region (helical). Residues P502–Y522 traverse the membrane as a helical segment. Over D523 to K689 the chain is Cytoplasmic. CBS domains lie at M553 to R613 and A630 to K689.

The protein belongs to the chloride channel (TC 2.A.49) family. In terms of processing, N-glycosylated on a single asparagine, probably Asn-365 or Asn-375. Expressed in two distinct regions of the kidney; the proximal convoluted tubule and the diluting segment.

Its subcellular location is the cell membrane. In terms of biological role, voltage-gated chloride channel. Chloride channels have several functions including the regulation of cell volume, the stabilization of membrane potential, signal transduction and transepithelial transport. The protein is Chloride channel protein ClC-Kb (clcnkb) of Xenopus laevis (African clawed frog).